The following is a 249-amino-acid chain: Metallo-beta-lactamase type 2 (249 aa).

Positions 1–18 (MKTVFILISMLFPVAVMA) are cleaved as a signal peptide. Positions 99, 101, 103, 162, and 181 each coordinate Zn(2+). 2 residues coordinate substrate: Lys184 and Asn193. Zn(2+) is bound at residue His223.

This sequence belongs to the metallo-beta-lactamase superfamily. Class-B beta-lactamase family. Monomer. Requires Zn(2+) as cofactor.

It is found in the periplasm. The enzyme catalyses a beta-lactam + H2O = a substituted beta-amino acid. Competitively inhibited by 4-morpholineethanesulfonic acid (MES), SB236050 and biphenyl tetrazoles (BPTs). Also inhibited by chelating agents such as EDTA and 1,10-phenanthroline. CcrA is not susceptible to inactivation by the beta-lactamase-blocking agents clavulanic acid or tazobactam. Its function is as follows. Confers resistance to the different beta-lactams antibiotics (penicillin, cephalosporin and carbapenem) via the hydrolysis of the beta-lactam ring. The protein is Metallo-beta-lactamase type 2 of Bacteroides fragilis.